Reading from the N-terminus, the 185-residue chain is Large ribosomal subunit protein uL5 (185 aa).

It belongs to the universal ribosomal protein uL5 family. In terms of assembly, part of the 50S ribosomal subunit; part of the 5S rRNA/L5/L18/L25 subcomplex. Contacts the 5S rRNA and the P site tRNA. Forms a bridge to the 30S subunit in the 70S ribosome.

This is one of the proteins that bind and probably mediate the attachment of the 5S RNA into the large ribosomal subunit, where it forms part of the central protuberance. In the 70S ribosome it contacts protein S13 of the 30S subunit (bridge B1b), connecting the 2 subunits; this bridge is implicated in subunit movement. Contacts the P site tRNA; the 5S rRNA and some of its associated proteins might help stabilize positioning of ribosome-bound tRNAs. This Rhizobium johnstonii (strain DSM 114642 / LMG 32736 / 3841) (Rhizobium leguminosarum bv. viciae) protein is Large ribosomal subunit protein uL5.